The chain runs to 233 residues: Ras-related protein Rab-20 (233 aa).

5 residues coordinate GTP: Gly-17, Lys-18, Thr-19, Asp-32, and Thr-36. Thr-19 lines the Mg(2+) pocket. 2 consecutive short sequence motifs (switch) follow at residues 28–41 (RRFP…GGAF) and 55–72 (DTAG…YCRG). Thr-36 and Asp-55 together coordinate Mg(2+). The GTP site is built by Gly-58, Asn-113, Lys-114, and Asp-116. Residues 119 to 130 (SERDTEGGEKEG) are compositionally biased toward basic and acidic residues. Positions 119–138 (SERDTEGGEKEGPASGKVGS) are disordered. Residues Ala-183 and Lys-184 each coordinate GTP. 2 S-geranylgeranyl cysteine lipidation sites follow: Cys-231 and Cys-232.

It belongs to the small GTPase superfamily. Rab family. It depends on Mg(2+) as a cofactor. Present in a variety of tissues, but not in brain.

It is found in the cytoplasmic vesicle. The protein resides in the phagosome. The protein localises to the phagosome membrane. It localises to the golgi apparatus. The enzyme catalyses GTP + H2O = GDP + phosphate + H(+). Regulated by guanine nucleotide exchange factors (GEFs) which promote the exchange of bound GDP for free GTP. Regulated by GTPase activating proteins (GAPs) which increase the GTP hydrolysis activity. Inhibited by GDP dissociation inhibitors (GDIs). Plays a role in apical endocytosis/recycling. Plays a role in the maturation and acidification of phagosomes that engulf pathogens, such as S.aureus and Mycobacterium. Plays a role in the fusion of phagosomes with lysosomes. The chain is Ras-related protein Rab-20 from Mus musculus (Mouse).